We begin with the raw amino-acid sequence, 492 residues long: Spindle assembly abnormal protein 6 (492 aa).

A PISA domain is found at 46-98; that stretch reads SGEKELKFEISRSDDFEFLFSETLNNEKYQILARDHDLTVDFDAFPKVIIQHL. The stretch at 192–407 forms a coiled coil; that stretch reads KSADELASLR…KIAHYRAQRF (216 aa).

In terms of assembly, nine homodimers form a cartwheel structure with an internal diameter of 23 nM and radial spokes connecting to the microtubule triplets. Interacts with sas-5.

Its subcellular location is the cytoplasm. The protein resides in the cytoskeleton. It localises to the microtubule organizing center. The protein localises to the centrosome. It is found in the centriole. Its function is as follows. Central scaffolding component of the centrioles ensuring their 9-fold symmetry. Required for centrosome biogenesis and duplication. This is Spindle assembly abnormal protein 6 from Caenorhabditis elegans.